The chain runs to 475 residues: Na(+)/H(+) antiporter NhaA 2 (475 aa).

12 consecutive transmembrane segments (helical) span residues 44–64 (AQAT…WWAN), 92–112 (LKHI…GLEI), 130–150 (LILC…LFNW), 156–176 (IGWG…LTLV), 186–206 (AFLV…IALF), 211–231 (ISVI…IANY), 232–252 (AGVL…WTML), 255–275 (GVHP…RPML), 331–351 (ALDL…NAGV), 368–388 (LGIV…ACWL), 406–426 (VIGM…IATL), and 442–462 (ILFA…IIAA).

Belongs to the NhaA Na(+)/H(+) (TC 2.A.33) antiporter family.

The protein resides in the cell inner membrane. It carries out the reaction Na(+)(in) + 2 H(+)(out) = Na(+)(out) + 2 H(+)(in). Its function is as follows. Na(+)/H(+) antiporter that extrudes sodium in exchange for external protons. The protein is Na(+)/H(+) antiporter NhaA 2 of Psychromonas ingrahamii (strain DSM 17664 / CCUG 51855 / 37).